The sequence spans 128 residues: Keratin-associated protein 2-1 (128 aa).

The segment at 5–112 (CCGSTFSSLS…SVQSPCCRPP (108 aa)) is 10 X 5 AA repeats of C-C-[CDPQRWG]-[APRS]-[CIPSTVD].

This sequence belongs to the KRTAP type 2 family. As to quaternary structure, interacts with hair keratins.

Functionally, in the hair cortex, hair keratin intermediate filaments are embedded in an interfilamentous matrix, consisting of hair keratin-associated proteins (KRTAP), which are essential for the formation of a rigid and resistant hair shaft through their extensive disulfide bond cross-linking with abundant cysteine residues of hair keratins. The matrix proteins include the high-sulfur and high-glycine-tyrosine keratins. The polypeptide is Keratin-associated protein 2-1 (KRTAP2-1) (Homo sapiens (Human)).